The chain runs to 640 residues: 1,4-alpha-glucan branching enzyme GlgB (640 aa).

The Nucleophile role is filled by Asp-318. Glu-371 (proton donor) is an active-site residue.

Belongs to the glycosyl hydrolase 13 family. GlgB subfamily. Monomer.

The enzyme catalyses Transfers a segment of a (1-&gt;4)-alpha-D-glucan chain to a primary hydroxy group in a similar glucan chain.. Its pathway is glycan biosynthesis; glycogen biosynthesis. In terms of biological role, catalyzes the formation of the alpha-1,6-glucosidic linkages in glycogen by scission of a 1,4-alpha-linked oligosaccharide from growing alpha-1,4-glucan chains and the subsequent attachment of the oligosaccharide to the alpha-1,6 position. The polypeptide is 1,4-alpha-glucan branching enzyme GlgB (Francisella tularensis subsp. holarctica (strain LVS)).